The sequence spans 377 residues: Nitric oxide reductase FlRd-NAD(+) reductase (377 aa).

The protein belongs to the FAD-dependent oxidoreductase family. FAD serves as cofactor.

It localises to the cytoplasm. It carries out the reaction 2 reduced [nitric oxide reductase rubredoxin domain] + NAD(+) + H(+) = 2 oxidized [nitric oxide reductase rubredoxin domain] + NADH. It functions in the pathway nitrogen metabolism; nitric oxide reduction. In terms of biological role, one of at least two accessory proteins for anaerobic nitric oxide (NO) reductase. Reduces the rubredoxin moiety of NO reductase. This chain is Nitric oxide reductase FlRd-NAD(+) reductase, found in Salmonella heidelberg (strain SL476).